The sequence spans 88 residues: Large ribosomal subunit protein eL37 (88 aa).

Residues 1-24 (MTKGTTSFGKRHNKSHTQCRRCGR) are disordered. A compositionally biased stretch (basic residues) spans 9–24 (GKRHNKSHTQCRRCGR). Zn(2+)-binding residues include Cys19, Cys22, Cys34, and Cys37. The segment at 19–37 (CRRCGRKSYHIQKKTCSSC) adopts a C4-type zinc-finger fold.

This sequence belongs to the eukaryotic ribosomal protein eL37 family. Zn(2+) is required as a cofactor.

Binds to the 23S rRNA. This Schistosoma mansoni (Blood fluke) protein is Large ribosomal subunit protein eL37 (RPL37).